Consider the following 97-residue polypeptide: Aspartyl/glutamyl-tRNA(Asn/Gln) amidotransferase subunit C (97 aa).

This sequence belongs to the GatC family. In terms of assembly, heterotrimer of A, B and C subunits.

The enzyme catalyses L-glutamyl-tRNA(Gln) + L-glutamine + ATP + H2O = L-glutaminyl-tRNA(Gln) + L-glutamate + ADP + phosphate + H(+). The catalysed reaction is L-aspartyl-tRNA(Asn) + L-glutamine + ATP + H2O = L-asparaginyl-tRNA(Asn) + L-glutamate + ADP + phosphate + 2 H(+). Its function is as follows. Allows the formation of correctly charged Asn-tRNA(Asn) or Gln-tRNA(Gln) through the transamidation of misacylated Asp-tRNA(Asn) or Glu-tRNA(Gln) in organisms which lack either or both of asparaginyl-tRNA or glutaminyl-tRNA synthetases. The reaction takes place in the presence of glutamine and ATP through an activated phospho-Asp-tRNA(Asn) or phospho-Glu-tRNA(Gln). This Prochlorococcus marinus (strain MIT 9211) protein is Aspartyl/glutamyl-tRNA(Asn/Gln) amidotransferase subunit C.